Reading from the N-terminus, the 56-residue chain is Small ribosomal subunit protein uS14 (56 aa).

Zn(2+) is bound by residues C21, C24, C39, and C42.

The protein belongs to the universal ribosomal protein uS14 family. Component of the 40S small ribosomal subunit. Zn(2+) is required as a cofactor.

The protein resides in the cytoplasm. It localises to the cytosol. Its subcellular location is the rough endoplasmic reticulum. In Culex quinquefasciatus (Southern house mosquito), this protein is Small ribosomal subunit protein uS14 (RpS29).